The following is a 261-amino-acid chain: Cobalt transport protein CbiM (261 aa).

The N-terminal stretch at 1–33 is a signal peptide; the sequence is MLRRVLASKRASLILMGMLSFYIIVSASAPAYA. 7 helical membrane-spanning segments follow: residues 41-61, 76-96, 108-128, 140-160, 172-192, 197-217, and 220-240; these read LPAGWAAFWWLVALPFMLLGV, LLLALAGAFTFVLSALKLPSV, LGSVLFGPLAMSVLGSLVLLF, TLGANAFSMAIAGPFAAYWIY, IAIFLAATLADLLTYIITSVQ, FPAPVGGFIASFAKFAGIFAI, and IPLAISEGLLTVLVWNWLQSY.

This sequence belongs to the CbiM family. In terms of assembly, forms an energy-coupling factor (ECF) transporter complex composed of an ATP-binding protein (A component, CbiO), a transmembrane protein (T component, CbiQ) and 2 possible substrate-capture proteins (S components, CbiM and CbiN) of unknown stoichimetry.

The protein resides in the cell inner membrane. It functions in the pathway cofactor biosynthesis; adenosylcobalamin biosynthesis. In terms of biological role, part of the energy-coupling factor (ECF) transporter complex CbiMNOQ involved in cobalt import. This chain is Cobalt transport protein CbiM, found in Nostoc sp. (strain PCC 7120 / SAG 25.82 / UTEX 2576).